Here is a 198-residue protein sequence, read N- to C-terminus: Recombination protein RecR (198 aa).

Residues 56 to 71 (CTTCGNIDTHDPCAIC) form a C4-type zinc finger. Residues 79-174 (RSLCVVEEVS…RLTQLAHGLP (96 aa)) enclose the Toprim domain.

It belongs to the RecR family.

May play a role in DNA repair. It seems to be involved in an RecBC-independent recombinational process of DNA repair. It may act with RecF and RecO. This chain is Recombination protein RecR, found in Sphingopyxis alaskensis (strain DSM 13593 / LMG 18877 / RB2256) (Sphingomonas alaskensis).